The chain runs to 130 residues: Arginine decarboxylase proenzyme (130 aa).

Catalysis depends on serine 78, which acts as the Schiff-base intermediate with substrate; via pyruvic acid. Serine 78 carries the post-translational modification Pyruvic acid (Ser); by autocatalysis. The Proton acceptor; for processing activity role is filled by histidine 83. The active-site Proton donor; for catalytic activity is cysteine 98.

Belongs to the prokaryotic AdoMetDC family. Type 1 subfamily. As to quaternary structure, heterooctamer of four alpha and four beta chains arranged as a tetramer of alpha/beta heterodimers. It depends on pyruvate as a cofactor. Post-translationally, is synthesized initially as an inactive proenzyme. Formation of the active enzyme involves a self-maturation process in which the active site pyruvoyl group is generated from an internal serine residue via an autocatalytic post-translational modification. Two non-identical subunits are generated from the proenzyme in this reaction, and the pyruvate is formed at the N-terminus of the alpha chain, which is derived from the carboxyl end of the proenzyme. The post-translation cleavage follows an unusual pathway, termed non-hydrolytic serinolysis, in which the side chain hydroxyl group of the serine supplies its oxygen atom to form the C-terminus of the beta chain, while the remainder of the serine residue undergoes an oxidative deamination to produce ammonia and the pyruvoyl group blocking the N-terminus of the alpha chain.

The catalysed reaction is L-arginine + H(+) = agmatine + CO2. It functions in the pathway amine and polyamine biosynthesis; agmatine biosynthesis; agmatine from L-arginine: step 1/1. Specifically catalyzes the decarboxylation of L-arginine to agmatine. Has no S-adenosylmethionine decarboxylase (AdoMetDC) activity. This is Arginine decarboxylase proenzyme from Sulfolobus acidocaldarius (strain ATCC 33909 / DSM 639 / JCM 8929 / NBRC 15157 / NCIMB 11770).